We begin with the raw amino-acid sequence, 581 residues long: MHPRYSPAPPLQQQQQQHQQMTGIGGPGGLLRGPANNSQQLPPQMPRSQNYANGSSSSAAAASAVTAAPPTPRSAFPVAPLTASAVALKGAIPQRPPAMTSPAAAAAGAALAAGAPYRGATSWTPQGYAPAAAAAAAAVAQQAAAYRYTAPLPQPAYAAYTPHTATTPATTTYGQRVPTAASPSNTNSSSSSNTGSQSGTLSTSLSHTTNTNTNMGPNGTAQNQNQQGGGGEQLSKTNLYIRGLQQGTTDKDLVNMCAQYGTIISTKAILDKTTNKCKGYGFVDFEQPAYAENAVKGLQAKGVQAQMAKQQEQDPTNLYIANLPPHFKETDLEAMLSKYGQVVSTRILRDQQMNSKGVGFARMESREKCEQIIQMFNGNTIPGAKDPLLVKFADGGPKKKNLFKTPDPNTRAWRDVSAEGIPVAYDPTLQQNGVSVNVGTPIGVPYSRFSAPPVGGYPVAGSQWIPGYMMTQPITQVDDQYMQMAAPQLGVTSYKPEAVNQVQPRGISMMVSGDTGVPYGTMMPQLATLQIGNSYISPTYPYYAPPPTIIPTMPMTDSEQASTAASPDEAYTQYPHQAAPK.

Over residues methionine 1–proline 10 the composition is skewed to pro residues. Residues methionine 1–arginine 73 are disordered. Tyrosine 5 carries the phosphotyrosine modification. Positions alanine 35–glycine 54 are enriched in polar residues. Over residues serine 55 to alanine 68 the composition is skewed to low complexity. 2 positions are modified to phosphotyrosine: tyrosine 128 and tyrosine 146. Positions proline 168–glutamine 226 are enriched in low complexity. A disordered region spans residues proline 168–leucine 234. 2 consecutive RRM domains span residues threonine 237–glutamine 310 and threonine 316–glycine 395. Positions methionine 555–lysine 581 are disordered.

Its function is as follows. Has a role in the perception of gravity. The polypeptide is Protein alan shepard (Drosophila willistoni (Fruit fly)).